Here is a 1032-residue protein sequence, read N- to C-terminus: Vacuolar membrane protease (1032 aa).

The Cytoplasmic segment spans residues 1–11 (MRFQNPFAFRP). A helical transmembrane segment spans residues 12–32 (GPVSFWTTVIYLALVIPLIYV). Residues 33-426 (HETVPPAPSD…AWAVFALRGL (394 aa)) are Vacuolar-facing. N-linked (GlcNAc...) asparagine glycans are attached at residues asparagine 50 and asparagine 142. Zn(2+) contacts are provided by histidine 207 and aspartate 219. Glutamate 253 acts as the Proton acceptor in catalysis. Zn(2+) contacts are provided by glutamate 254, glutamate 279, and histidine 352. The helical transmembrane segment at 427-447 (FAWSLTLLVATPLILVAITYI) threads the bilayer. Residues 448–482 (LARKDKYYFFSRDIKMHHDINDDPVVLGGWKGFLR) lie on the Cytoplasmic side of the membrane. The helical transmembrane segment at 483–503 (FPFALVFAGALTIASTLLLAK) threads the bilayer. Topologically, residues 504–511 (FNPLIIYS) are vacuolar. Residues 512–532 (SPYAVWSMTLSIFYFSFWLIM) traverse the membrane as a helical segment. Over 533–545 (RGASFIRPSALHR) the chain is Cytoplasmic. A helical membrane pass occupies residues 546-566 (GYVLIWLFALGWGLQVVGAVA). Topologically, residues 567-573 (EDRLHIA) are vacuolar. The helical transmembrane segment at 574–594 (ALYATVFLQSAVFLALFISLL) threads the bilayer. The Cytoplasmic portion of the chain corresponds to 595–708 (EQFALLGKHD…WSGRLPSWTW (114 aa)). Residues 616–631 (RDISSHGTDHESRPQP) show a composition bias toward basic and acidic residues. Residues 616-666 (RDISSHGTDHESRPQPEEEPAQPEGDEDESEDATETTPLRANEPGYGSSTR) are disordered. Residues 632-649 (EEEPAQPEGDEDESEDAT) show a composition bias toward acidic residues. A helical membrane pass occupies residues 709–729 (IIQFLLLAPVPVILFGNLGLV). Over 730-745 (AMSALQMTGTDGGSLL) the chain is Vacuolar. A helical transmembrane segment spans residues 746–766 (VPVLTLGIVSIFLLLPLTPFI). Residues 767–773 (HRVSHHV) are Cytoplasmic-facing. The helical transmembrane segment at 774–794 (PMFLLCVFAGTFIYNLVAFPF) threads the bilayer. The Vacuolar portion of the chain corresponds to 795-1032 (SDSHRFKFYF…LVEVRKTYKV (238 aa)). Residues asparagine 812 and asparagine 884 are each glycosylated (N-linked (GlcNAc...) asparagine).

Belongs to the peptidase M28 family. Zn(2+) serves as cofactor.

It is found in the vacuole membrane. May be involved in vacuolar sorting and osmoregulation. This Fusarium vanettenii (strain ATCC MYA-4622 / CBS 123669 / FGSC 9596 / NRRL 45880 / 77-13-4) (Fusarium solani subsp. pisi) protein is Vacuolar membrane protease.